Reading from the N-terminus, the 328-residue chain is Homeobox protein Hox-C13 (328 aa).

The disordered stretch occupies residues 23-48 (AAESGSGGGGGGGGAGGAGGGCSGAS). Over residues 27 to 45 (GSGGGGGGGGAGGAGGGCS) the composition is skewed to gly residues. Residues 258-317 (GRKKRVPYTKVQLKELEKEYAASKFITKEKRRRISATTNLSERQVTIWFQNRRVKEKKVV) constitute a DNA-binding region (homeobox).

This sequence belongs to the Abd-B homeobox family. As to expression, expressed in differentiating keratinocytes. In the hair follicle lower matrix, expressed in all 3 hair shaft-forming compartments, i.e. cuticle, cortex and medulla. Expression stops sharply at the boundary with the germinal matrix compartment.

It localises to the nucleus. Functionally, transcription factor which plays a role in hair follicle differentiation. Regulates FOXQ1 expression and that of other hair-specific genes. The polypeptide is Homeobox protein Hox-C13 (Hoxc13) (Mus musculus (Mouse)).